The chain runs to 243 residues: Triosephosphate isomerase (243 aa).

Substrate is bound at residue 9–11 (NWK). The active-site Electrophile is the histidine 96. Glutamate 165 functions as the Proton acceptor in the catalytic mechanism. Substrate is bound by residues glycine 171, serine 204, and 225–226 (GG).

The protein belongs to the triosephosphate isomerase family. Homodimer.

It is found in the cytoplasm. The enzyme catalyses D-glyceraldehyde 3-phosphate = dihydroxyacetone phosphate. It participates in carbohydrate biosynthesis; gluconeogenesis. It functions in the pathway carbohydrate degradation; glycolysis; D-glyceraldehyde 3-phosphate from glycerone phosphate: step 1/1. In terms of biological role, involved in the gluconeogenesis. Catalyzes stereospecifically the conversion of dihydroxyacetone phosphate (DHAP) to D-glyceraldehyde-3-phosphate (G3P). In Synechococcus sp. (strain CC9311), this protein is Triosephosphate isomerase.